A 52-amino-acid chain; its full sequence is ATP synthase protein 8 (52 aa).

The helical transmembrane segment at 7–23 (MMWFSLFIMFSMTMMLF) threads the bilayer.

This sequence belongs to the ATPase protein 8 family. F-type ATPases have 2 components, CF(1) - the catalytic core - and CF(0) - the membrane proton channel.

Its subcellular location is the mitochondrion membrane. In terms of biological role, mitochondrial membrane ATP synthase (F(1)F(0) ATP synthase or Complex V) produces ATP from ADP in the presence of a proton gradient across the membrane which is generated by electron transport complexes of the respiratory chain. F-type ATPases consist of two structural domains, F(1) - containing the extramembraneous catalytic core and F(0) - containing the membrane proton channel, linked together by a central stalk and a peripheral stalk. During catalysis, ATP synthesis in the catalytic domain of F(1) is coupled via a rotary mechanism of the central stalk subunits to proton translocation. Part of the complex F(0) domain. Minor subunit located with subunit a in the membrane. The protein is ATP synthase protein 8 (MT-ATP8) of Locusta migratoria (Migratory locust).